The sequence spans 142 residues: Transcription antitermination protein NusB (142 aa).

It belongs to the NusB family.

Involved in transcription antitermination. Required for transcription of ribosomal RNA (rRNA) genes. Binds specifically to the boxA antiterminator sequence of the ribosomal RNA (rrn) operons. This Roseiflexus castenholzii (strain DSM 13941 / HLO8) protein is Transcription antitermination protein NusB.